Here is a 105-residue protein sequence, read N- to C-terminus: N(2)-fixation sustaining protein CowN (105 aa).

The protein belongs to the CowN family.

Its function is as follows. Is required to sustain N(2)-dependent growth in the presence of low levels of carbon monoxide (CO). Probably acts by protecting the N(2) fixation ability of the nitrogenase complex, which is inactivated in the presence of CO. This Tolumonas auensis (strain DSM 9187 / NBRC 110442 / TA 4) protein is N(2)-fixation sustaining protein CowN.